Consider the following 526-residue polypeptide: ATP synthase subunit alpha (526 aa).

G171–T178 provides a ligand contact to ATP.

It belongs to the ATPase alpha/beta chains family. F-type ATPases have 2 components, CF(1) - the catalytic core - and CF(0) - the membrane proton channel. CF(1) has five subunits: alpha(3), beta(3), gamma(1), delta(1), epsilon(1). CF(0) has four main subunits: a, b, b' and c.

It localises to the cell inner membrane. It carries out the reaction ATP + H2O + 4 H(+)(in) = ADP + phosphate + 5 H(+)(out). Its function is as follows. Produces ATP from ADP in the presence of a proton gradient across the membrane. The alpha chain is a regulatory subunit. In Chlorobium phaeobacteroides (strain BS1), this protein is ATP synthase subunit alpha.